The chain runs to 386 residues: Tumor necrosis factor receptor superfamily member 10D (386 aa).

Disordered stretches follow at residues 1–25 (MGLW…ARTA) and 62–90 (DEVP…SHRS). Positions 1–55 (MGLWGQSVPTASSARAGRYPGARTASGTRPWLLDPKILKFVVFIVAVLLPVRVDS) are cleaved as a signal peptide. The Extracellular portion of the chain corresponds to 56–211 (ATIPRQDEVP…ILGMLASPYH (156 aa)). TNFR-Cys repeat units follow at residues 58–97 (IPRQ…GACN), 98–139 (PCTE…DTVC), and 140–180 (QCEK…DIKC). The span at 64-75 (VPQQTVAPQQQR) shows a compositional bias: polar residues. Intrachain disulfides connect cysteine 83–cysteine 96, cysteine 99–cysteine 115, cysteine 118–cysteine 131, cysteine 121–cysteine 139, cysteine 141–cysteine 155, cysteine 158–cysteine 172, and cysteine 162–cysteine 180. Asparagine 127 carries N-linked (GlcNAc...) asparagine glycosylation. The N-linked (GlcNAc...) asparagine glycan is linked to asparagine 182. The helical transmembrane segment at 212-232 (YLIIIVVLVIILAVVVVGFSC) threads the bilayer. Over 233 to 386 (RKKFISYLKG…DEAGSATSCL (154 aa)) the chain is Cytoplasmic. In terms of domain architecture, Death; truncated spans 340–366 (SADISTLLDASATLEEGHAKETIQDQL).

In terms of tissue distribution, widely expressed, in particular in fetal kidney, lung and liver, and in adult testis and liver. Also expressed in peripheral blood leukocytes, colon and small intestine, ovary, prostate, thymus, spleen, pancreas, kidney, lung, placenta and heart.

It localises to the membrane. In terms of biological role, receptor for the cytotoxic ligand TRAIL. Contains a truncated death domain and hence is not capable of inducing apoptosis but protects against TRAIL-mediated apoptosis. Reports are contradictory with regards to its ability to induce the NF-kappa-B pathway. According to PubMed:9382840, it cannot but according to PubMed:9430226, it can induce the NF-kappa-B pathway. In Homo sapiens (Human), this protein is Tumor necrosis factor receptor superfamily member 10D.